An 875-amino-acid polypeptide reads, in one-letter code: Probable dipeptidyl-aminopeptidase B (875 aa).

The tract at residues 1–90 (MSEPKPIQDT…ASSETTPPRK (90 aa)) is disordered. The Cytoplasmic segment spans residues 1–98 (MSEPKPIQDT…RKGVDRKLKK (98 aa)). Residues 19–28 (SSISSASTTS) show a composition bias toward low complexity. Positions 33–46 (RLAEESEKNHDASS) are enriched in basic and acidic residues. A helical; Signal-anchor for type II membrane protein transmembrane segment spans residues 99-119 (VLLIVGGFFVAAWIVSLVVFL). Over 120–875 (TNKSYKHGSQ…VNDAKPKIES (756 aa)) the chain is Vacuolar. Asn-354 and Asn-567 each carry an N-linked (GlcNAc...) asparagine glycan. Positions 689–715 (VDFQSSDGGRRTTRSPRRATGRPSATS) are disordered. Residues 699–708 (RTTRSPRRAT) show a composition bias toward basic residues. Residue Ser-726 is the Charge relay system of the active site. N-linked (GlcNAc...) asparagine glycosylation is present at Asn-785. Residues Asp-803 and His-836 each act as charge relay system in the active site.

It belongs to the peptidase S9B family.

The protein resides in the vacuole membrane. It carries out the reaction Release of an N-terminal dipeptide, Xaa-Yaa-|-Zaa-, from a polypeptide, preferentially when Yaa is Pro, provided Zaa is neither Pro nor hydroxyproline.. Functionally, type IV dipeptidyl-peptidase which removes N-terminal dipeptides sequentially from polypeptides having unsubstituted N-termini provided that the penultimate residue is proline. This chain is Probable dipeptidyl-aminopeptidase B (DAPB), found in Verticillium alfalfae (strain VaMs.102 / ATCC MYA-4576 / FGSC 10136) (Verticillium wilt of alfalfa).